The sequence spans 159 residues: Photosystem II extrinsic protein U, chloroplastic (159 aa).

Belongs to the PsbU family. PSII is composed of 1 copy each of membrane proteins PsbA, PsbB, PsbC, PsbD, PsbE, PsbF, PsbH, PsbI, PsbJ, PsbK, PsbL, PsbM, PsbT, PsbX, PsbY, PsbZ, Psb30/Ycf12, at least 3 peripheral proteins of the oxygen-evolving complex and a large number of cofactors. It forms dimeric complexes. Part of the oxygen-evolving complex of photosystem II.

It is found in the plastid. The protein resides in the chloroplast thylakoid membrane. One of the extrinsic, lumenal subunits of photosystem II (PSII). PSII is a light-driven water plastoquinone oxidoreductase, using light energy to abstract electrons from H(2)O, generating a proton gradient subsequently used for ATP formation. The extrinsic proteins stabilize the structure of photosystem II oxygen-evolving complex (OEC), the ion environment of oxygen evolution and protect the OEC against heat-induced inactivation. The polypeptide is Photosystem II extrinsic protein U, chloroplastic (Karenia brevis (Red tide dinoflagellate)).